The sequence spans 47 residues: uncharacterized protein (47 aa).

This is an uncharacterized protein from Saccharomyces cerevisiae (strain ATCC 204508 / S288c) (Baker's yeast).